The primary structure comprises 459 residues: Exodeoxyribonuclease 7 large subunit (459 aa).

Belongs to the XseA family. In terms of assembly, heterooligomer composed of large and small subunits.

The protein localises to the cytoplasm. It catalyses the reaction Exonucleolytic cleavage in either 5'- to 3'- or 3'- to 5'-direction to yield nucleoside 5'-phosphates.. Bidirectionally degrades single-stranded DNA into large acid-insoluble oligonucleotides, which are then degraded further into small acid-soluble oligonucleotides. The protein is Exodeoxyribonuclease 7 large subunit of Pseudomonas aeruginosa (strain UCBPP-PA14).